A 209-amino-acid chain; its full sequence is ATP-dependent Clp protease proteolytic subunit 2 (209 aa).

The active-site Nucleophile is S106. H131 is an active-site residue.

It belongs to the peptidase S14 family. In terms of assembly, fourteen ClpP subunits assemble into 2 heptameric rings which stack back to back to give a disk-like structure with a central cavity, resembling the structure of eukaryotic proteasomes.

Its subcellular location is the cytoplasm. It catalyses the reaction Hydrolysis of proteins to small peptides in the presence of ATP and magnesium. alpha-casein is the usual test substrate. In the absence of ATP, only oligopeptides shorter than five residues are hydrolyzed (such as succinyl-Leu-Tyr-|-NHMec, and Leu-Tyr-Leu-|-Tyr-Trp, in which cleavage of the -Tyr-|-Leu- and -Tyr-|-Trp bonds also occurs).. Functionally, cleaves peptides in various proteins in a process that requires ATP hydrolysis. Has a chymotrypsin-like activity. Plays a major role in the degradation of misfolded proteins. The sequence is that of ATP-dependent Clp protease proteolytic subunit 2 from Rhizobium etli (strain ATCC 51251 / DSM 11541 / JCM 21823 / NBRC 15573 / CFN 42).